We begin with the raw amino-acid sequence, 194 residues long: Large ribosomal subunit protein bL17 (194 aa).

The segment at 126 to 194 (AEPKQTKART…SPEQTNKQEE (69 aa)) is disordered. Residues 131 to 140 (TKARTRRGKG) are compositionally biased toward basic residues. 2 stretches are compositionally biased toward polar residues: residues 144-161 (ATTT…QDMA) and 181-194 (LDTQ…KQEE).

Belongs to the bacterial ribosomal protein bL17 family. Part of the 50S ribosomal subunit. Contacts protein L32.

The protein is Large ribosomal subunit protein bL17 of Amoebophilus asiaticus (strain 5a2).